We begin with the raw amino-acid sequence, 149 residues long: Large ribosomal subunit protein uL13 (149 aa).

This sequence belongs to the universal ribosomal protein uL13 family. Part of the 50S ribosomal subunit.

Its function is as follows. This protein is one of the early assembly proteins of the 50S ribosomal subunit, although it is not seen to bind rRNA by itself. It is important during the early stages of 50S assembly. The protein is Large ribosomal subunit protein uL13 of Chlorobium luteolum (strain DSM 273 / BCRC 81028 / 2530) (Pelodictyon luteolum).